The sequence spans 281 residues: UPF0162 protein XF_1494 (281 aa).

TPR repeat units lie at residues 193–226 and 227–260; these read VRILRNLHSVYANTNRWDRAARCADRILKLVPNQ and PEALRDRGLAYLQLGHRSGARNDLTRYLQLYPST.

Belongs to the UPF0162 family.

The chain is UPF0162 protein XF_1494 from Xylella fastidiosa (strain 9a5c).